The primary structure comprises 951 residues: Serine/threonine-protein phosphatase 4 regulatory subunit 1 (951 aa).

HEAT repeat units follow at residues 26 to 63 (ESDVIIIPSALDFVSQDEMLTPLGRLDKYAASENVFNR), 65 to 81 (MVARSLLDTLREVCDDE), 82 to 119 (RDCIAVLERISRLADDSEPTVRAELMEQVPHIALFCQE), 127 to 164 (AFSKYLLPIVVRYLADQNNQVRKTSQAALLALLEQELI), 168 to 206 (DVETKVCPVLIDLTAPDSNDDVKTEAVAIMCKMAPMVGK), 208 to 246 (ITERLILPRFCEMCCDCRMFHVRKVCAANFGDICSVVGQ), 248 to 285 (ATEEMLLPRFFQLCSDNVWGVRKACAECFMAVSCATCQ), and 287 to 324 (IRRTKLSALFINLISDPSRWVRQAAFQSLGPFISTFAN). Disordered stretches follow at residues 325–377 (PSSS…HSSA), 411–451 (SESP…PLDQ), and 474–499 (QQDPEERLSPERTGDVPAAPLPGPPN). A compositionally biased stretch (basic and acidic residues) spans 332–365 (FKDESKSSEDSSAEDKDRMRDNDVVEEEHRRPED). Polar residues-rich tracts occupy residues 411-421 (SESPQEAASND) and 430-445 (NSKSASRPDAGTSSPE). Residues 474–487 (QQDPEERLSPERTG) show a composition bias toward basic and acidic residues. An HEAT 9 repeat occupies 506-543 (KELEEMIENLEPHMDDPDVKAQVDVLSAALRASSLDAH). Residues 590–612 (DYVHGGADVSPGDGFSPDEDRRP) form a disordered region. HEAT repeat units lie at residues 699-735 (LTAADLVPIFNGFLKDLDEVRIGVLKHLHDFLKLLHI), 800-838 (WISYKLVSEMVKKLHTATPPTFGVDLINELVENFGRCPK), and 862-899 (QFAVHLMPHLLTLANDRVPNVRVLLAKTLRQTLLEKEY). Phosphoserine is present on Ser-936.

As to quaternary structure, serine/threonine-protein phosphatase 4 (PP4) occurs in different assemblies of the catalytic and one or more regulatory subunits. Component of the PP4 complex PPP4C-PPP4R1. Interacts with HDAC3.

Regulatory subunit of serine/threonine-protein phosphatase 4. May play a role in regulation of cell division in renal glomeruli. The PPP4C-PPP4R1 PP4 complex may play a role in dephosphorylation and regulation of HDAC3. Plays a role in the inhibition of TNF-induced NF-kappa-B activation by regulating the dephosphorylation of TRAF2. This chain is Serine/threonine-protein phosphatase 4 regulatory subunit 1 (Ppp4r1), found in Mus musculus (Mouse).